The sequence spans 460 residues: Cyclin-A1-1 (460 aa).

Disordered regions lie at residues Met1–Gln52 and Pro95–Gln126. Low complexity-rich tracts occupy residues Ser10–Ser19 and Ser100–Ser111.

Belongs to the cyclin family. Cyclin AB subfamily. Interacts with FZR2/CCS52A1, FZR1/CCS52A2 and FZR3/CCS52B.

This is Cyclin-A1-1 (CYCA1-1) from Arabidopsis thaliana (Mouse-ear cress).